We begin with the raw amino-acid sequence, 205 residues long: Thymidylate kinase (205 aa).

7–14 (GIDGSGKT) contacts ATP.

This sequence belongs to the thymidylate kinase family.

It catalyses the reaction dTMP + ATP = dTDP + ADP. Phosphorylation of dTMP to form dTDP in both de novo and salvage pathways of dTTP synthesis. This Wolbachia sp. subsp. Brugia malayi (strain TRS) protein is Thymidylate kinase.